A 93-amino-acid chain; its full sequence is AALPPGDAAAAQGGSNGVGPNLYGIVGRKSGTVEGFTYSKANQDSGVMWTPQVLDVYLENPKKFMPGTKMSFAGLKKPQERADLIAYLETLKD.

Residues A1–G13 show a composition bias toward low complexity. The tract at residues A1–N21 is disordered. M70 is a heme c binding site.

Belongs to the cytochrome c family. Post-translationally, binds 1 heme c group covalently per subunit.

The protein localises to the mitochondrion intermembrane space. In terms of biological role, electron carrier protein. The oxidized form of the cytochrome c heme group can accept an electron from the heme group of the cytochrome c1 subunit of cytochrome reductase. Cytochrome c then transfers this electron to the cytochrome oxidase complex, the final protein carrier in the mitochondrial electron-transport chain. The sequence is that of Cytochrome c from Trypanosoma brucei brucei.